A 338-amino-acid polypeptide reads, in one-letter code: 1-aminocyclopropane-1-carboxylate deaminase (338 aa).

Lysine 51 carries the N6-(pyridoxal phosphate)lysine modification. Serine 78 (nucleophile) is an active-site residue.

It belongs to the ACC deaminase/D-cysteine desulfhydrase family. As to quaternary structure, homotrimer. It depends on pyridoxal 5'-phosphate as a cofactor.

The enzyme catalyses 1-aminocyclopropane-1-carboxylate + H2O = 2-oxobutanoate + NH4(+). Catalyzes a cyclopropane ring-opening reaction, the irreversible conversion of 1-aminocyclopropane-1-carboxylate (ACC) to ammonia and alpha-ketobutyrate. Allows growth on ACC as a nitrogen source. In Burkholderia ambifaria (strain MC40-6), this protein is 1-aminocyclopropane-1-carboxylate deaminase.